Here is an 845-residue protein sequence, read N- to C-terminus: MKYDHQQIEAKWQKFWQDNQTYRSDDNFQKPKYYVLDMFPYPSGAGLHVGHVVGYTATDIIARYMRTKGYNVMHPMGWDSFGLPAEQYAIRTGTHPAESTQENINNYRRQLRALGFSYDWNRELATSDPNYYKWTQWIFTKLYEKGLAYEAEMLVNYCPALGTVLANEEIENGKTKDGGHPVERRPLKQWILKITAYADRLLQDLDLLDWPESLKKLQINWIGKSEGAYVQFIEKTTQEAFSVFTTRPDTLFGVSYLVLAPEHPLVSHITASSQQQAVRAYQAQIASKSDLDRTELNRDKTGVFTGAYAVNPVNHKEIPIWISDYVLMNVGTGAIMAVPAHDERDFEFAKTFKLPIIPVYDPVCEEITIRNQVLAGQQCWPGHGICVNSACGDLSLNGLNLDQAKKIVINWLEINHKGKSATTYKLRDWLFSRQRYWGEPFPLLKFEDGSVRLLDEDELPLCPPAITNYKPTGDGKGPLTQIKEWVEIIDTKTGKKAFRDTNIMPQWAGSCWYYLRFCDPHNTEKAFSPEKEKYWLPVDLYIGGVEHAVLHLLYARFWHKVLYDCGYVHTLEPFQTLRNQGLVVARSYQNKMRVYVEPRYVEQRDGKYFDSRTGEELTSQIDKMSKSKLNGESPDEIIQEYGADALRLYEMFMGPLEKEKVWNTDAVSGTRRFLNRFYEMAFSDKVTNETSEEGLKLGHRLVHSVMKDMELLQFNTAIAKMMEFINEFTKLVTYPKQVIQMATQVLAPFAPHLAEEVWEHLKCEGSLSFTPYPQVEEKYLQENVITYVVQINGKVRGRFDLPKDQTQENVLEAAKNNPHIQQYINKKEIGKVVFVPNKLLSIVLR.

The short motif at 40-51 (PYPSGAGLHVGH) is the 'HIGH' region element. A 'KMSKS' region motif is present at residues 623–627 (KMSKS). Lysine 626 contacts ATP.

The protein belongs to the class-I aminoacyl-tRNA synthetase family.

It localises to the cytoplasm. It carries out the reaction tRNA(Leu) + L-leucine + ATP = L-leucyl-tRNA(Leu) + AMP + diphosphate. This chain is Leucine--tRNA ligase, found in Protochlamydia amoebophila (strain UWE25).